The chain runs to 327 residues: Phenylalanine--tRNA ligase alpha subunit (327 aa).

Position 252 (Glu252) interacts with Mg(2+).

This sequence belongs to the class-II aminoacyl-tRNA synthetase family. Phe-tRNA synthetase alpha subunit type 1 subfamily. As to quaternary structure, tetramer of two alpha and two beta subunits. The cofactor is Mg(2+).

The protein resides in the cytoplasm. It carries out the reaction tRNA(Phe) + L-phenylalanine + ATP = L-phenylalanyl-tRNA(Phe) + AMP + diphosphate + H(+). This Erwinia tasmaniensis (strain DSM 17950 / CFBP 7177 / CIP 109463 / NCPPB 4357 / Et1/99) protein is Phenylalanine--tRNA ligase alpha subunit.